Reading from the N-terminus, the 604-residue chain is BTB/POZ domain-containing protein SR1IP1 (604 aa).

One can recognise a BTB domain in the interval 27-96 (SDVTVHVGEA…CYGINFDMST (70 aa)). The NPH3 domain maps to 201-474 (DWWAEDLTVL…VQVLYYEQQR (274 aa)). Phosphotyrosine is present on tyrosine 415. Disordered regions lie at residues 478–499 (EVTN…VLPP) and 532–604 (FEKE…HSIS). Positions 500-541 (KLSSYTDELSKLKRENQDLKLELLKMKMKLKEFEKESEKKTS) form a coiled coil. Residues 541–558 (SSSTISTNPSSPISTAST) are compositionally biased toward low complexity. Residues 591-604 (GRTKPPKDRRHSIS) show a composition bias toward basic residues.

It belongs to the NPH3 family. As to quaternary structure, interacts with CAMTA3 and CUL3A.

It functions in the pathway protein modification; protein ubiquitination. Its function is as follows. Acts as a substrate-specific adapter of an E3 ubiquitin-protein ligase complex (CUL3-RBX1-BTB) which mediates the ubiquitination and subsequent proteasomal degradation of target proteins. Involved in disease resistance. Acts as a substrate adapter that recruits CAMTA3/SR1 for ubiquitination and degradation during pathogen infection. Acts as a positive regulator of plant defense by removing the defense suppressor CAMTA3/SR1. The protein is BTB/POZ domain-containing protein SR1IP1 of Arabidopsis thaliana (Mouse-ear cress).